The following is a 426-amino-acid chain: MSAIVRIQAREVLDSRGNPTVEAEVYLDNGGMGRAIVPSGASTGEREAVELRDGGQRYGGKGVRKAVEHVNGEIQDALLGMEAEEQEHIDAALCALDGTENKARLGANAILSVSLATAHAAAHAAGQPLYRYIGGLGPLQLPVPMMNVINGGAHADNDVDMQEFMLIPAGAESFSEALQMGVEVFHSLKAVLQSRGLATTVGDEGGFAPNLPSNEAALELLMDAINKAGYQPGKDIWLGMDVASSEFYRDGRYHLASERRELDSAQFVDYLAALADRYPLISIEDGMDQNDWEGWITLTDRLGDRLQLVGDDIFVTNTTILREGIERGVANSILIKLNQIGTLSETLAAIEMAKVHSYTAIVSHRSGETEDTTLADVAVATGCGQIKTGSLSRTDRVAKYNRLLRIEEDLGDAARYPGLATFYNLD.

Residue Gln162 participates in (2R)-2-phosphoglycerate binding. Glu204 acts as the Proton donor in catalysis. 3 residues coordinate Mg(2+): Asp241, Glu284, and Asp311. (2R)-2-phosphoglycerate contacts are provided by Lys336, Arg365, Ser366, and Lys387. Lys336 (proton acceptor) is an active-site residue.

This sequence belongs to the enolase family. Mg(2+) serves as cofactor.

It is found in the cytoplasm. The protein resides in the secreted. Its subcellular location is the cell surface. It carries out the reaction (2R)-2-phosphoglycerate = phosphoenolpyruvate + H2O. Its pathway is carbohydrate degradation; glycolysis; pyruvate from D-glyceraldehyde 3-phosphate: step 4/5. Functionally, catalyzes the reversible conversion of 2-phosphoglycerate (2-PG) into phosphoenolpyruvate (PEP). It is essential for the degradation of carbohydrates via glycolysis. This chain is Enolase, found in Acidithiobacillus ferrooxidans (strain ATCC 23270 / DSM 14882 / CIP 104768 / NCIMB 8455) (Ferrobacillus ferrooxidans (strain ATCC 23270)).